Here is a 203-residue protein sequence, read N- to C-terminus: uncharacterized protein (203 aa).

Residues 1–23 form the signal peptide; that stretch reads MKKIYKALISSLLLSTSINVAYA. An SH3b domain is found at 24–87; the sequence is ETQYVTENLS…ILNSDLSSTP (64 aa). Residues 167–189 traverse the membrane as a helical segment; the sequence is IAIQWFIYGGSVLGVGLLFGLLI.

The protein to E.coli YgiM.

It is found in the membrane. This is an uncharacterized protein from Haemophilus influenzae (strain ATCC 51907 / DSM 11121 / KW20 / Rd).